The sequence spans 376 residues: 26S proteasome non-ATPase regulatory subunit 4 (376 aa).

Residues 5 to 188 (STMVCVDNSE…LADALISSPI (184 aa)) form the VWFA domain. A Glycyl lysine isopeptide (Lys-Gly) (interchain with G-Cter in SUMO2) cross-link involves residue Lys-122. An interaction with UBQLN1 region spans residues 197–262 (LGLGASDFEF…TEDSDDALLK (66 aa)). Residues 211–230 (SADPELALALRVSMEEQRQR) form the UIM 1 domain. The segment covering 224–237 (MEEQRQRQEEEARR) has biased composition (basic and acidic residues). The segment at 224–257 (MEEQRQRQEEEARRAAAASAAEAGIATPGTEDSD) is disordered. Residues Thr-250 and Thr-253 each carry the phosphothreonine modification. 2 positions are modified to phosphoserine: Ser-256 and Ala-259. One can recognise a UIM 2 domain in the interval 282 to 301 (TEEEQIAYAMQMSLQGTEFS). The tract at residues 355 to 376 (MGALASQATKDGKNDKKEEEKK) is disordered. Position 360 is a phosphoserine (Ser-360). A compositionally biased stretch (basic and acidic residues) spans 364–376 (KDGKNDKKEEEKK).

This sequence belongs to the proteasome subunit S5A family. As to quaternary structure, component of the 19S proteasome regulatory particle complex. The 26S proteasome consists of a 20S core particle (CP) and two 19S regulatory subunits (RP). The regulatory particle is made of a lid composed of 9 subunits, a base containing 6 ATPases and few additional components including PSMD4. Interacts with NUB1. Interacts with SQSTM1. Interacts with UBQLN4. Interacts with UBE3A. Interacts with UBQLN1 (via ubiquitin-like domain). Interacts with DDI2. As to expression, isoform Rpn10A is ubiquitous whereas isoform Rpn10E is mostly expressed in the embryonic brain.

Functionally, component of the 26S proteasome, a multiprotein complex involved in the ATP-dependent degradation of ubiquitinated proteins. This complex plays a key role in the maintenance of protein homeostasis by removing misfolded or damaged proteins, which could impair cellular functions, and by removing proteins whose functions are no longer required. Therefore, the proteasome participates in numerous cellular processes, including cell cycle progression, apoptosis, or DNA damage repair. PSMD4 acts as an ubiquitin receptor subunit through ubiquitin-interacting motifs and selects ubiquitin-conjugates for destruction. Displays a preferred selectivity for longer polyubiquitin chains. This Mus musculus (Mouse) protein is 26S proteasome non-ATPase regulatory subunit 4 (Psmd4).